A 475-amino-acid polypeptide reads, in one-letter code: Ankyrin repeat, SAM and basic leucine zipper domain-containing protein 1 (475 aa).

Positions 1 to 24 (MAAAVQRGLPVAGGGESSESEDDG) are disordered. A phosphoserine mark is found at serine 17, serine 18, and serine 20. ANK repeat units lie at residues 45 to 74 (EKNEIFKKALTTGDISLVEELLDSGISVES), 78 to 107 (YGWTPLMYAASVANVELVRVLLDRGANASF), 110 to 144 (DKHTVLITACSARGSQEQILKCVELLLSRNADPNV), 148 to 177 (RLMTPIMYAARDGHPQVVALLVAQGAEVNA), 181 to 210 (NGYTALTWAARQGHKNVVLKLLELGANKML), and 214 to 243 (DGKTPSEVANKNKHPEIFSLLSLTLNPLEG). Residues 272–334 (SYAAFGDLEI…KILAALKELA (63 aa)) enclose the SAM domain.

In terms of assembly, interacts with DDX4, PIWIL1, RANBP9 and TDRD1.

The protein resides in the cytoplasm. Plays a central role during spermatogenesis by repressing transposable elements and preventing their mobilization, which is essential for the germline integrity. Acts via the piRNA metabolic process, which mediates the repression of transposable elements during meiosis by forming complexes composed of piRNAs and Piwi proteins and governs the methylation and subsequent repression of transposons. Its association with pi-bodies suggests a participation in the primary piRNAs metabolic process. Required prior to the pachytene stage to facilitate the production of multiple types of piRNAs, including those associated with repeats involved in the regulation of retrotransposons. May act by mediating protein-protein interactions during germ cell maturation. This Loxodonta africana (African elephant) protein is Ankyrin repeat, SAM and basic leucine zipper domain-containing protein 1 (ASZ1).